The primary structure comprises 208 residues: Imidazoleglycerol-phosphate dehydratase (208 aa).

Belongs to the imidazoleglycerol-phosphate dehydratase family.

It is found in the cytoplasm. It carries out the reaction D-erythro-1-(imidazol-4-yl)glycerol 3-phosphate = 3-(imidazol-4-yl)-2-oxopropyl phosphate + H2O. The protein operates within amino-acid biosynthesis; L-histidine biosynthesis; L-histidine from 5-phospho-alpha-D-ribose 1-diphosphate: step 6/9. In Symbiobacterium thermophilum (strain DSM 24528 / JCM 14929 / IAM 14863 / T), this protein is Imidazoleglycerol-phosphate dehydratase.